A 415-amino-acid chain; its full sequence is Putative serpin-Z6C (415 aa).

An RCL region spans residues G357 to A381.

It belongs to the serpin family.

In terms of biological role, probable serine protease inhibitor. This Oryza sativa subsp. japonica (Rice) protein is Putative serpin-Z6C.